The primary structure comprises 77 residues: Putative membrane protein insertion efficiency factor (77 aa).

It belongs to the UPF0161 family.

It localises to the cell membrane. Its function is as follows. Could be involved in insertion of integral membrane proteins into the membrane. This Geobacillus sp. (strain WCH70) protein is Putative membrane protein insertion efficiency factor.